A 233-amino-acid chain; its full sequence is Large ribosomal subunit protein uL1 (233 aa).

This sequence belongs to the universal ribosomal protein uL1 family. As to quaternary structure, part of the 50S ribosomal subunit.

Functionally, binds directly to 23S rRNA. The L1 stalk is quite mobile in the ribosome, and is involved in E site tRNA release. In terms of biological role, protein L1 is also a translational repressor protein, it controls the translation of the L11 operon by binding to its mRNA. This chain is Large ribosomal subunit protein uL1, found in Paracoccus denitrificans (strain Pd 1222).